We begin with the raw amino-acid sequence, 224 residues long: Flagellar L-ring protein (224 aa).

The first 15 residues, 1-15 (MARYLVLAVALLLAA), serve as a signal peptide directing secretion. C16 carries N-palmitoyl cysteine lipidation. The S-diacylglycerol cysteine moiety is linked to residue C16.

The protein belongs to the FlgH family. The basal body constitutes a major portion of the flagellar organelle and consists of four rings (L,P,S, and M) mounted on a central rod.

Its subcellular location is the cell outer membrane. The protein localises to the bacterial flagellum basal body. Functionally, assembles around the rod to form the L-ring and probably protects the motor/basal body from shearing forces during rotation. The chain is Flagellar L-ring protein from Shewanella baltica (strain OS185).